A 598-amino-acid polypeptide reads, in one-letter code: Nuclear receptor subfamily 4immunitygroup A member 1 (598 aa).

4 disordered regions span residues 1–44 (MPCI…EAAP), 131–158 (YYGS…DGSF), 177–206 (LPKA…AQSP), and 221–265 (GESY…GSEG). A compositionally biased stretch (low complexity) spans 134 to 145 (SPCSAPSPSTPS). Residues 171–466 (RAWTEQLPKA…PGEGKLIFCS (296 aa)) form a required for nuclear import region. A DNA-binding region (nuclear receptor) is located at residues 264–339 (EGRCAVCGDN…VGMVKEVVRT (76 aa)). 2 consecutive NR C4-type zinc fingers follow at residues 267–287 (CAVC…CEGC) and 303–327 (CLAN…FQKC). The tract at residues 268–354 (AVCGDNASCQ…RRGRLPSKPK (87 aa)) is required for binding NBRE-containing DNA. The interval 299-361 (AKYICLANKD…KPKQPPDASP (63 aa)) is required for the interaction with RXRA. Residue S341 is modified to Phosphoserine; by PKA. Positions 341–361 (SLKGRRGRLPSKPKQPPDASP) are disordered. S351 bears the Phosphoserine mark. The NR LBD domain maps to 360-595 (SPANLLTSLV…PIIDKIFMDT (236 aa)). The interval 521–544 (PRRVEELQNRIASCLKEHVAAVAG) is binds lipopolysaccharide. An AF-2 region spans residues 584–595 (PPPIIDKIFMDT).

Belongs to the nuclear hormone receptor family. NR4 subfamily. In terms of assembly, binds the NGFI-B response element (NBRE) as a monomer. Binds the Nur response element (NurRE), consisting of two inverse NBRE-related octanucleotide repeats separated by 6 base-pairs, as a dimer. Interacts (via N-terminus) with NLRP3 (via LRR repeat domain); the interaction is direct, requires binding of NR4A1/Nur77 to NBRE-containing dsDNA and lipopolysaccharide, and leads to non-canonical NLRP3 inflammasome activation. Interacts with GADD45GIP1. Interacts with STK11. Interacts with IFI27. Heterodimer (via DNA-binding domain) with RXRA (via C-terminus); DNA-binding of the heterodimer is enhanced by 9-cis retinoic acid. Competes for the RXRA interaction with EP300 and thereby attenuates EP300 mediated acetylation of RXRA. Interacts with NCOA1. Interacts with NCOA2. Interacts with NCOA3. It depends on Zn(2+) as a cofactor. Post-translationally, phosphorylated at Ser-351 by RPS6KA1 and RPS6KA3 in response to mitogenic or stress stimuli. Acetylated by p300/CBP, acetylation increases stability. Deacetylated by HDAC1. In terms of tissue distribution, fetal muscle and adult liver, brain and thyroid.

The protein resides in the nucleus. Its subcellular location is the cytoplasm. It is found in the cytosol. The protein localises to the mitochondrion. Its activity is regulated as follows. Its transcription factor activity is activated by binding cytosporone B (Csn-B) via its ligand-binding (NR LBD) domain and stimulates recruitment of coactivators NCOA1 and NCOA2, but not NCOA3, to promoters. Csn-B-binding is also accompanied by its translocation to the mitochondrion. Its transcription factor activity is activated by corticotropin-releasing hormone (CRH) and forskolin. Not activated by binding cytosporone C (Csn-C). Its function is as follows. Orphan nuclear receptor. Binds the NGFI-B response element (NBRE) 5'-AAAGGTCA-3'. Binds 9-cis-retinoic acid outside of its ligand-binding (NR LBD) domain. Participates in energy homeostasis by sequestrating the kinase STK11 in the nucleus, thereby attenuating cytoplasmic AMPK activation. Regulates the inflammatory response in macrophages by regulating metabolic adaptations during inflammation, including repressing the transcription of genes involved in the citric acid cycle (TCA). Inhibits NF-kappa-B signaling by binding to low-affinity NF-kappa-B binding sites, such as at the IL2 promoter. May act concomitantly with NR4A2 in regulating the expression of delayed-early genes during liver regeneration. Plays a role in the vascular response to injury. In the cytosol, upon its detection of both bacterial lipopolysaccharide (LPS) and NBRE-containing mitochondrial DNA released by GSDMD pores during pyroptosis, it promotes non-canonical NLRP3 inflammasome activation by stimulating association of NLRP3 and NEK7. In Homo sapiens (Human), this protein is Nuclear receptor subfamily 4immunitygroup A member 1 (NR4A1).